The primary structure comprises 443 residues: Probable glycine dehydrogenase (decarboxylating) subunit 1 (443 aa).

Belongs to the GcvP family. N-terminal subunit subfamily. In terms of assembly, the glycine cleavage system is composed of four proteins: P, T, L and H. In this organism, the P 'protein' is a heterodimer of two subunits.

It carries out the reaction N(6)-[(R)-lipoyl]-L-lysyl-[glycine-cleavage complex H protein] + glycine + H(+) = N(6)-[(R)-S(8)-aminomethyldihydrolipoyl]-L-lysyl-[glycine-cleavage complex H protein] + CO2. In terms of biological role, the glycine cleavage system catalyzes the degradation of glycine. The P protein binds the alpha-amino group of glycine through its pyridoxal phosphate cofactor; CO(2) is released and the remaining methylamine moiety is then transferred to the lipoamide cofactor of the H protein. The protein is Probable glycine dehydrogenase (decarboxylating) subunit 1 of Maridesulfovibrio salexigens (strain ATCC 14822 / DSM 2638 / NCIMB 8403 / VKM B-1763) (Desulfovibrio salexigens).